We begin with the raw amino-acid sequence, 205 residues long: Guanylyl cyclase-activating protein 1 (205 aa).

Gly2 is lipidated: N-myristoyl glycine. Asn3 is modified (deamidated asparagine). EF-hand domains follow at residues 14–49 (SSTE…KNLS), 51–86 (WASQ…VLKG), 87–122 (KVEQ…IRAI), and 131–166 (TAEE…DQML). Ca(2+) is bound by residues Asp64, Asn66, Asp68, Tyr70, Glu75, Asp100, Asp102, Asn104, Cys106, Glu111, Asp144, Asn146, Asp148, Glu150, and Glu155. The interval 185 to 205 (NGEQDEEGASGRETEAAEADG) is disordered.

As to quaternary structure, homodimer. Detected in the retina. Detected in rod and cone photoreceptor cells (at protein level). Also present in certain pinealocytes.

The protein localises to the membrane. It localises to the photoreceptor inner segment. It is found in the cell projection. The protein resides in the cilium. Its subcellular location is the photoreceptor outer segment. In terms of biological role, stimulates retinal guanylyl cyclase when free calcium ions concentration is low and inhibits guanylyl cyclase when free calcium ions concentration is elevated. This Ca(2+)-sensitive regulation of retinal guanylyl cyclase is a key event in recovery of the dark state of rod photoreceptors following light exposure. May be involved in cone photoreceptor light response and recovery of response in bright light. The polypeptide is Guanylyl cyclase-activating protein 1 (GUCA1A) (Bos taurus (Bovine)).